The primary structure comprises 270 residues: ISITFFLLLLNKVNSAEILSFSFPKFVSNQEDLLLQGDALVSSEGELQLTTVENGVPVWNSTGRALYYAPVHIWDNSTGRVASFATSFSFVVKAPVASKSADGIAFFLAPLNNQIHGAGGGLYGLFNSSSYSSSYQIVAVEFDTHTNAWDPNTRHIGIDVNSVKSTKTVTWGWENGEVANVLITYQAATEMLTVSLTYPSNQTSYILSAAVDLKSILPEWVRVGFTATTGLTTQYVETNDVLSWSFTSTLETSDCGAEDNNVHLASYAFI.

Positions 1–15 (ISITFFLLLLNKVNS) are cleaved as a signal peptide. Asn-60, Asn-76, and Asn-127 each carry an N-linked (GlcNAc...) asparagine glycan. Mn(2+)-binding residues include Glu-141 and Asp-143. Ca(2+) contacts are provided by Asp-143, His-145, Asn-147, and Asp-150. Mn(2+) is bound by residues Asp-150 and His-155. N-linked (GlcNAc...) asparagine glycosylation is present at Asn-201.

It belongs to the leguminous lectin family.

Functionally, galNAc-specific lectin. The chain is Bark lectin from Styphnolobium japonicum (Japanese pagoda tree).